A 188-amino-acid chain; its full sequence is Small ribosomal subunit protein bS18c (188 aa).

Residues 1-19 (MNNQSFNNFSQVNSNSSFF) are compositionally biased toward low complexity. The segment at 1–79 (MNNQSFNNFS…TSNKRKVLSV (79 aa)) is disordered. Positions 25–71 (NLQNTNLEMTNGTNPPSSFSKQTPQKRQSFGTNTNFSKGNSSRGSTS) are enriched in polar residues.

This sequence belongs to the bacterial ribosomal protein bS18 family. As to quaternary structure, part of the 30S ribosomal subunit.

Its subcellular location is the plastid. It localises to the chloroplast. The sequence is that of Small ribosomal subunit protein bS18c from Tetradesmus obliquus (Green alga).